The following is a 212-amino-acid chain: uncharacterized protein (212 aa).

This is an uncharacterized protein from Acanthamoeba polyphaga (Amoeba).